Reading from the N-terminus, the 207-residue chain is Phosphoribosylglycinamide formyltransferase (207 aa).

Position 13–15 (13–15 (GSN)) interacts with N(1)-(5-phospho-beta-D-ribosyl)glycinamide. (6R)-10-formyltetrahydrofolate is bound by residues 100 to 103 (MHIL) and N120. Catalysis depends on H122, which acts as the Proton donor. Residue D162 coordinates (6R)-10-formyltetrahydrofolate. E191 serves as a coordination point for N(1)-(5-phospho-beta-D-ribosyl)glycinamide.

This sequence belongs to the GART family.

The catalysed reaction is N(1)-(5-phospho-beta-D-ribosyl)glycinamide + (6R)-10-formyltetrahydrofolate = N(2)-formyl-N(1)-(5-phospho-beta-D-ribosyl)glycinamide + (6S)-5,6,7,8-tetrahydrofolate + H(+). Its pathway is purine metabolism; IMP biosynthesis via de novo pathway; N(2)-formyl-N(1)-(5-phospho-D-ribosyl)glycinamide from N(1)-(5-phospho-D-ribosyl)glycinamide (10-formyl THF route): step 1/1. The polypeptide is Phosphoribosylglycinamide formyltransferase (ade5) (Schizosaccharomyces pombe (strain 972 / ATCC 24843) (Fission yeast)).